The primary structure comprises 264 residues: 3-methyl-2-oxobutanoate hydroxymethyltransferase (264 aa).

Aspartate 43 and aspartate 82 together coordinate Mg(2+). 3-methyl-2-oxobutanoate contacts are provided by residues 43-44 (DS), aspartate 82, and lysine 111. Position 113 (glutamate 113) interacts with Mg(2+). Catalysis depends on glutamate 180, which acts as the Proton acceptor.

This sequence belongs to the PanB family. As to quaternary structure, homodecamer; pentamer of dimers. The cofactor is Mg(2+).

It localises to the cytoplasm. It catalyses the reaction 3-methyl-2-oxobutanoate + (6R)-5,10-methylene-5,6,7,8-tetrahydrofolate + H2O = 2-dehydropantoate + (6S)-5,6,7,8-tetrahydrofolate. The protein operates within cofactor biosynthesis; (R)-pantothenate biosynthesis; (R)-pantoate from 3-methyl-2-oxobutanoate: step 1/2. Catalyzes the reversible reaction in which hydroxymethyl group from 5,10-methylenetetrahydrofolate is transferred onto alpha-ketoisovalerate to form ketopantoate. The protein is 3-methyl-2-oxobutanoate hydroxymethyltransferase of Campylobacter fetus subsp. fetus (strain 82-40).